Reading from the N-terminus, the 754-residue chain is Disintegrin and metalloproteinase domain-containing protein 32 (754 aa).

Residues Met-1–Ala-22 form the signal peptide. Ser-23 carries the phosphoserine modification. A propeptide spanning residues Ser-23–Lys-176 is cleaved from the precursor. Asn-126 is a glycosylation site (N-linked (GlcNAc...) asparagine). At Pro-177–Lys-689 the chain is on the extracellular side. One can recognise a Peptidase M12B domain in the interval Leu-187–Pro-384. 4 cysteine pairs are disulfide-bonded: Cys-296–Cys-379, Cys-338–Cys-363, Cys-340–Cys-345, and Cys-454–Cys-475. Asn-362, Asn-469, Asn-570, and Asn-571 each carry an N-linked (GlcNAc...) asparagine glycan. Residues Ala-391 to Asn-483 enclose the Disintegrin domain. One can recognise an EGF-like domain in the interval Gln-628 to Gln-660. 3 cysteine pairs are disulfide-bonded: Cys-632–Cys-642, Cys-636–Cys-648, and Cys-650–Cys-659. A helical membrane pass occupies residues Trp-690–Gly-710. Over Trp-711–Ser-754 the chain is Cytoplasmic. Over residues Lys-720–Asp-733 the composition is skewed to basic and acidic residues. A disordered region spans residues Lys-720–Ser-754. The span at Ser-734 to Ser-754 shows a compositional bias: low complexity.

Expressed in sperm (at protein level). Highly expressed in the testis and weakly expressed in the epididymis, brain and heart.

It localises to the membrane. Functionally, may play a role in sperm development and fertilization This is a non-catalytic metalloprotease-like protein. The sequence is that of Disintegrin and metalloproteinase domain-containing protein 32 from Mus musculus (Mouse).